A 537-amino-acid polypeptide reads, in one-letter code: ESX-2 secretion system protein EccE2 (537 aa).

A helical membrane pass occupies residues 31–51 (ALGGQLGAVMAVVVGVALVFV).

Belongs to the EccE family. As to quaternary structure, could be part of the ESX-2 / type VII secretion system (T7SS), which is composed of cytosolic and membrane components.

Its subcellular location is the cell membrane. The chain is ESX-2 secretion system protein EccE2 (eccE2) from Mycobacterium tuberculosis (strain CDC 1551 / Oshkosh).